Here is a 729-residue protein sequence, read N- to C-terminus: Glutamine synthetase (729 aa).

Residues 85-174 form the GS beta-grasp domain; the sequence is THYTHWFQPL…IPTIFISYTG (90 aa). Positions 179-615 constitute a GS catalytic domain; that stretch reads YKTPLLKALA…VLGDLAINHI (437 aa). Residues Glu-215, Glu-217, Glu-286, and Glu-293 each coordinate Mg(2+). L-glutamate is bound by residues 337 to 338 and Gly-338; that span reads NG. Residue His-342 coordinates Mg(2+). ATP is bound by residues Ser-346 and Arg-458. Arg-458 contributes to the L-glutamate binding site.

It belongs to the glutamine synthetase family. Homohexamer. The cofactor is Mg(2+).

The protein localises to the cytoplasm. The enzyme catalyses L-glutamate + NH4(+) + ATP = L-glutamine + ADP + phosphate + H(+). Inhibited by L-histidine (46%), L-arginine (38%) and L-methionine-DL-sulphoximine. The activity of this enzyme is not controlled by adenylation. Functionally, catalyzes the ATP-dependent biosynthesis of glutamine from glutamate and ammonia. The sequence is that of Glutamine synthetase from Bacteroides fragilis (strain YCH46).